The following is a 574-amino-acid chain: Frizzled-7 (574 aa).

Positions Met-1–Ala-32 are cleaved as a signal peptide. Over Gln-33–Trp-256 the chain is Extracellular. The FZ domain occupies Pro-44–Gln-163. Cystine bridges form between Cys-49-Cys-110, Cys-57-Cys-103, Cys-94-Cys-131, Cys-120-Cys-160, and Cys-124-Cys-148. The N-linked (GlcNAc...) asparagine glycan is linked to Asn-63. Asn-164 is a glycosylation site (N-linked (GlcNAc...) asparagine). The helical transmembrane segment at Val-257 to Val-277 threads the bilayer. Residues Asp-278–Pro-288 are Cytoplasmic-facing. Residues Ile-289–Leu-309 form a helical membrane-spanning segment. At Glu-310–Cys-336 the chain is on the extracellular side. Residues Thr-337 to Leu-357 traverse the membrane as a helical segment. The Cytoplasmic segment spans residues Ser-358–Gln-379. The chain crosses the membrane as a helical span at residues Tyr-380 to Gly-400. Over Gln-401–Gly-423 the chain is Extracellular. Residues Phe-424–Phe-444 traverse the membrane as a helical segment. Over Val-445–Arg-470 the chain is Cytoplasmic. The chain crosses the membrane as a helical span at residues Ile-471–Tyr-491. Residues Glu-492–Thr-528 are Extracellular-facing. A helical transmembrane segment spans residues Val-529–Trp-549. The Cytoplasmic segment spans residues Ser-550–Val-574. Positions Lys-552–Trp-557 match the Lys-Thr-X-X-X-Trp motif, mediates interaction with the PDZ domain of Dvl family members motif. A PDZ-binding motif is present at residues Thr-572–Val-574.

It belongs to the G-protein coupled receptor Fz/Smo family. Interacts with MAGI3. Interacts with DVL1. Interacts with CCDC88C/DAPLE; the interaction displaces DVL1 from FZD7, leading to inhibition of canonical Wnt signaling and triggering of non-canonical Wnt responses. Interacts with MYOC. Binds to SDCBP; this interaction is increased by inositol trisphosphate (IP3). Interacts with glypican GPC3. As to quaternary structure, (Microbial infection) Interacts with C.difficile toxin TcdB; frizzled receptors constitute the major host receptors for TcdB in the colonic epithelium. Post-translationally, ubiquitinated by ZNRF3, leading to its degradation by the proteasome. High expression in adult skeletal muscle and fetal kidney, followed by fetal lung, adult heart, brain, and placenta. Specifically expressed in squamous cell esophageal carcinomas.

It localises to the cell membrane. The protein localises to the endosome membrane. Receptor for Wnt proteins. Most frizzled receptors are coupled to the beta-catenin canonical signaling pathway, which leads to the activation of disheveled proteins, inhibition of GSK-3 kinase, nuclear accumulation of beta-catenin and activation of Wnt target genes. A second signaling pathway involving PKC and calcium fluxes has been seen for some family members, but it is not yet clear if it represents a distinct pathway or if it can be integrated in the canonical pathway, as PKC seems to be required for Wnt-mediated inactivation of GSK-3 kinase. Both pathways seem to involve interactions with G-proteins. Activation by WNT8 induces expression of beta-catenin target genes. Following ligand activation, binds to CCDC88C/DAPLE which displaces DVL1 from FZD7 and leads to inhibition of canonical Wnt signaling, activation of G-proteins by CCDC88C and triggering of non-canonical Wnt responses. May be involved in transduction and intercellular transmission of polarity information during tissue morphogenesis and/or in differentiated tissues. Functionally, (Microbial infection) Acts as a receptor for C.difficile toxin TcdB in the colonic epithelium. The sequence is that of Frizzled-7 (FZD7) from Homo sapiens (Human).